Here is a 628-residue protein sequence, read N- to C-terminus: 69 kDa protein (628 aa).

5 disordered regions span residues 1 to 25, 141 to 332, 346 to 404, 418 to 493, and 535 to 628; these read MSNGLPISIGRPCTHDSQRSLSAPD, HFHA…FRPS, LGHL…LLPN, RGKI…DPVL, and QTVL…PDTD. The span at 299-312 shows a compositional bias: low complexity; the sequence is PPTTTSRPTGPPSR. Over residues 320–331 the composition is skewed to polar residues; that stretch reads YQSSPHTPNFRP. The segment covering 434–450 has biased composition (pro residues); it reads GAPPPPRRLPSPAPRPQ.

The protein belongs to the tymoviridae protein p69 family.

Its function is as follows. Acts as a suppressor of RNA-mediated gene silencing, also known as post-transcriptional gene silencing (PTGS), a mechanism of plant viral defense that limits the accumulation of viral RNAs. In Brassica (Chinese cabbage), this protein is 69 kDa protein.